We begin with the raw amino-acid sequence, 182 residues long: Adenine phosphoribosyltransferase (182 aa).

This sequence belongs to the purine/pyrimidine phosphoribosyltransferase family. Homodimer.

It localises to the cytoplasm. It carries out the reaction AMP + diphosphate = 5-phospho-alpha-D-ribose 1-diphosphate + adenine. It functions in the pathway purine metabolism; AMP biosynthesis via salvage pathway; AMP from adenine: step 1/1. Catalyzes a salvage reaction resulting in the formation of AMP, that is energically less costly than de novo synthesis. The sequence is that of Adenine phosphoribosyltransferase from Streptomyces galbus.